The sequence spans 570 residues: High-affinity hexose transporter HXT7 (570 aa).

Over 1–60 the chain is Cytoplasmic; sequence MSQDAAIAEQTPVEHLSAVDSASHSVLSTPSNKAERDEIKAYGEGEEHEPVVEIPKRPAS. The helical transmembrane segment at 61–81 threads the bilayer; the sequence is AYVTVSIMCIMIAFGGFVFGW. Residues 82-116 lie on the Extracellular side of the membrane; sequence DTGTISGFINQTDFIRRFGMKHKDGTNYLSKVRTG. The N-linked (GlcNAc...) asparagine glycan is linked to Asn91. A helical transmembrane segment spans residues 117 to 137; that stretch reads LIVSIFNIGCAIGGIILSKLG. The Cytoplasmic portion of the chain corresponds to 138–143; that stretch reads DMYGRK. The chain crosses the membrane as a helical span at residues 144–164; that stretch reads VGLIVVVVIYIIGIIIQIASI. At 165–174 the chain is on the extracellular side; that stretch reads NKWYQYFIGR. Residues 175 to 195 traverse the membrane as a helical segment; sequence IISGLGVGGIAVLSPMLISEV. Residues 196 to 201 are Cytoplasmic-facing; that stretch reads SPKHLR. A helical membrane pass occupies residues 202–222; that stretch reads GTLVSCYQLMITAGIFLGYCT. Residues 223 to 236 are Extracellular-facing; the sequence is NFGTKNYSNSVQWR. N-linked (GlcNAc...) asparagine glycosylation is present at Asn228. Residues 237–257 traverse the membrane as a helical segment; the sequence is VPLGLCFAWALFMIGGMTFVP. Residues 258–340 are Cytoplasmic-facing; sequence ESPRYLAEVG…IQSLQQLTGD (83 aa). A helical transmembrane segment spans residues 341-357; the sequence is NYFFYYGTTIFKAVGLS. Residues 358-363 are Extracellular-facing; sequence DSFETS. A helical membrane pass occupies residues 364 to 381; that stretch reads IVLGIVNFASTFVGIYVV. Topologically, residues 382–388 are cytoplasmic; the sequence is ERYGRRT. A helical membrane pass occupies residues 389–409; it reads CLLWGAASMTACMVVYASVGV. The Extracellular portion of the chain corresponds to 410-431; the sequence is TRLWPNGQDQPSSKGAGNCMIV. The helical transmembrane segment at 432–452 threads the bilayer; the sequence is FACFYIFCFATTWAPIPYVVV. Topologically, residues 453–469 are cytoplasmic; it reads SETFPLRVKSKAMSIAT. The chain crosses the membrane as a helical span at residues 470 to 490; that stretch reads AANWLWGFLIGFFTPFITGAI. Residue Asn491 is a topological domain, extracellular. Residues 492–512 form a helical membrane-spanning segment; the sequence is FYYGYVFMGCLVFMFFYVLLV. Residues 513-570 are Cytoplasmic-facing; it reads VPETKGLTLEEVNTMWEEGVLPWKSASWVPPSRRGANYDAEEMTHDDKPLYKRMFSTK. Thr556 carries the phosphothreonine modification. A Glycyl lysine isopeptide (Lys-Gly) (interchain with G-Cter in ubiquitin) cross-link involves residue Lys560.

The protein belongs to the major facilitator superfamily. Sugar transporter (TC 2.A.1.1) family.

It localises to the membrane. Functionally, high-affinity glucose transporter. This is High-affinity hexose transporter HXT7 (HXT7) from Saccharomyces cerevisiae (strain ATCC 204508 / S288c) (Baker's yeast).